The sequence spans 529 residues: Peptide chain release factor 3 (529 aa).

The 270-residue stretch at 11–280 folds into the tr-type G domain; it reads SKRRTFAIIS…GLTEWAPAPK (270 aa). GTP-binding positions include 20-27, 88-92, and 142-145; these read SHPDAGKT, DTPGH, and NKLD.

Belongs to the TRAFAC class translation factor GTPase superfamily. Classic translation factor GTPase family. PrfC subfamily.

It is found in the cytoplasm. Its function is as follows. Increases the formation of ribosomal termination complexes and stimulates activities of RF-1 and RF-2. It binds guanine nucleotides and has strong preference for UGA stop codons. It may interact directly with the ribosome. The stimulation of RF-1 and RF-2 is significantly reduced by GTP and GDP, but not by GMP. The protein is Peptide chain release factor 3 of Vibrio campbellii (strain ATCC BAA-1116).